Consider the following 91-residue polypeptide: Small ribosomal subunit protein uS19 (91 aa).

Belongs to the universal ribosomal protein uS19 family.

Its function is as follows. Protein S19 forms a complex with S13 that binds strongly to the 16S ribosomal RNA. In Prochlorococcus marinus (strain MIT 9303), this protein is Small ribosomal subunit protein uS19.